The sequence spans 459 residues: MFS-type transporter SLC18B1 (459 aa).

Met1 bears the N-acetylmethionine mark. The segment covering 1–10 (MDEAGSPAPA) has biased composition (low complexity). Positions 1–27 (MDEAGSPAPAGTGGGDDPGGSTRETSR) are disordered. Residues 1 to 33 (MDEAGSPAPAGTGGGDDPGGSTRETSRRLSREQ) are Cytoplasmic-facing. Residue Ser21 is modified to Phosphoserine. The helical transmembrane segment at 34 to 54 (IFVLVSAASMNLGCMMTYSIL) threads the bilayer. Residues 55–70 (GPFFPKEAEKKGASNT) are Extracellular-facing. A helical transmembrane segment spans residues 71-91 (MIGMIFGCYALFELLASLVFG). Residues 92 to 100 (KYLVHIGAK) are Cytoplasmic-facing. The chain crosses the membrane as a helical span at residues 101-121 (FMFIAGMFVSGGVTILFGVLD). At 122–127 (QLPEGP) the chain is on the extracellular side. Residues 128-148 (IFIAMCFLVRIVDAIGFGAAI) form a helical membrane-spanning segment. At 149 to 167 (TASSSILAKAFPNNVATVM) the chain is on the cytoplasmic side. Residues 168-188 (GSLEVFSGLGLVAGPPLGGLL) traverse the membrane as a helical segment. The Extracellular segment spans residues 189–195 (YQSFGYE). The chain crosses the membrane as a helical span at residues 196 to 216 (VPFIFLGCIVLLMIPLNLYIL). The Cytoplasmic segment spans residues 217–235 (PSYAQESDPGKQSFWKLVT). A helical membrane pass occupies residues 236–256 (LPKMGLLAFVIISLSSCFGFL). Residues 257–274 (DPTLSLFVMEKFSLSTGY) are Extracellular-facing. A helical membrane pass occupies residues 275–295 (VGLVFLGLSLSYAISSPLFGL). Topologically, residues 296 to 306 (LSDKMPTLRKW) are cytoplasmic. A helical transmembrane segment spans residues 307–327 (LLVFGNLITAGCYMLLGPVPL). The Extracellular portion of the chain corresponds to 328–333 (LHIKSQ). Residues 334–354 (LWLLVLVLVVNGISAGMSIIP) form a helical membrane-spanning segment. The Cytoplasmic segment spans residues 355-379 (TFPEMLSCAYANGFEDSISTLGLVS). A helical membrane pass occupies residues 380–400 (GLFGAMWSVGAFMGPILGGFL). Residues 401 to 409 (CEKIGFEWA) are Extracellular-facing. A helical transmembrane segment spans residues 410–430 (AAMQGLWTLLSGVSMALFYLW). Over 431 to 459 (EDSTARRRSKAQNSLGTEEERAALLPNDT) the chain is Cytoplasmic. The tract at residues 440 to 459 (KAQNSLGTEEERAALLPNDT) is disordered.

It belongs to the major facilitator superfamily. As to expression, widely expressed, with highest expression in the lung, pancreas and kidney. High expression in the CNS, particularly in the hypothalamus, the thalamus and the cerebellum. In the forebrain, abundantly expressed in the telencephalon, especially in the cerebral cortex layers, except layer 1, as well as in the induseum griseum, the piriform area, the taenia tecta, dorsal part and in the entorhinal area, lateral part. Lower levels in the bed anterior olfactory nucleus, posteroventral part and in layer two of the olfactory tubercle. In the amygdala, high levels observed in the intercalated nucleus and the medial nucleus. In the diencephalon, expressed in the nuclei in both the hypothalamus and thalamus. Among the hypothalamic areas, strongest expression in the arcuate nucleus and in the ventromedial nucleus, as well as in the suprachiasmatic nucleus, anterior nucleus, especially in its central part, and in the magnocellular division of the paraventricular nucleus. In the thalamus, highest levels in the medial habenula. Expression also observed in the paraventricular thalamic nucleus, parataenial nucleus, central medial nucleus, intermediodorsal nucleus and lateral dorsal nucleus. In the hindbrain, detected in the cerebellum and in the pons. In the midbrain and the medulla, expression levels were modest. In the midbrain, highest expression in the periaqueductal gray and all subdivisions of the interpeduncular nucleus, except for the caudal part. In the pons, the strongest labeling was seen in the nucleus incertus and in the tegmental nucleus. Expressed in bone marrow-derived mast cells (at protein level).

Its subcellular location is the cytoplasmic vesicle. The protein localises to the secretory vesicle membrane. It is found in the secretory vesicle. It localises to the synaptic vesicle membrane. The enzyme catalyses spermine(in) + n H(+)(out) = spermine(out) + n H(+)(in). The catalysed reaction is spermidine(in) + n H(+)(out) = spermidine(out) + n H(+)(in). It carries out the reaction serotonin(in) + n H(+)(out) = serotonin(out) + n H(+)(in). Functionally, proton-coupled polyamine antiporter involved in the translocation of polyamines from cytosol into secretory vesicles prior to their release via exocytosis. Uses the electrochemical proton gradient generated by a V-type proton-pumping ATPase to couple the efflux of protons with the uptake of a polyamine molecule. Facilitates vesicular storage of spermine and spermidine in astrocytes with an impact on glutamatergic neuronal transmission and memory formation. Upon antigen stimulation, regulates polyamine accumulation and release in mast cell secretory granules, which in turn potentiates mast cell degranulation and histamine secretion. This chain is MFS-type transporter SLC18B1, found in Mus musculus (Mouse).